The chain runs to 123 residues: Small ribosomal subunit protein uS12 (123 aa).

The interval 1–32 is disordered; that stretch reads MPTIQQLVRKGRTDKISKNKTPALKGSPQRRG. D89 is modified (3-methylthioaspartic acid). A disordered region spans residues 103–123; the sequence is DTQGVKGRKQARSRYGAKKEK. The segment covering 108-123 has biased composition (basic residues); that stretch reads KGRKQARSRYGAKKEK.

It belongs to the universal ribosomal protein uS12 family. In terms of assembly, part of the 30S ribosomal subunit. Contacts proteins S8 and S17. May interact with IF1 in the 30S initiation complex.

In terms of biological role, with S4 and S5 plays an important role in translational accuracy. Functionally, interacts with and stabilizes bases of the 16S rRNA that are involved in tRNA selection in the A site and with the mRNA backbone. Located at the interface of the 30S and 50S subunits, it traverses the body of the 30S subunit contacting proteins on the other side and probably holding the rRNA structure together. The combined cluster of proteins S8, S12 and S17 appears to hold together the shoulder and platform of the 30S subunit. The chain is Small ribosomal subunit protein uS12 from Cutibacterium acnes (strain DSM 16379 / KPA171202) (Propionibacterium acnes).